The following is a 205-amino-acid chain: MTTNSLLIIDFEFTMPDGKYSPQNFFPEIIEAGIVKSIDDEVVETFSSYVRPKKFPKLTKRCKSFLKITQKQVDEGMRFEDFIRKLNELDPEKNSTIITWGNMDMKVLKQNCMFNHIPFPFKGEMRDLSLEYKNFFGDRTLTGLWKAAEEYGDSGTGTHHKALDDALTAYKLFKLVEQDKQYLEKPKPPTIGERIDLTELLKRAT.

Residues 6–173 enclose the Exonuclease domain; the sequence is LLIIDFEFTM…DDALTAYKLF (168 aa). The Mg(2+) site is built by D10, E12, and D104. Residue E12 is the Proton acceptor of the active site. E12 contacts AMP. The Proton acceptor role is filled by H160. Position 160 (H160) interacts with AMP. D165 lines the Mg(2+) pocket.

Requires Mg(2+) as cofactor.

Functionally, specifically inhibits the KinA pathway to sporulation. The polypeptide is Probable 3'-5' exonuclease KapD (kapD) (Bacillus subtilis (strain 168)).